Reading from the N-terminus, the 412-residue chain is MRDETPAYLRARHYFYEILESQAQTSRMGVIVNRFIVFFIVLSVGITVMESVPAMREDYGRLFQALELLCLVMFSIEYYIRIWIAPEHLPYHHMSPLRAAWAYMISPQGIVDCISVMPLWIALFGPDDLRVLIILRMLRLLKFARYSSGMRSLLEVLESERRALMACLVILACATLVSATAMHIAEGHVQPEKFGTIPDAMWWAIVTLSTIGYGDVVPATGIGRMVASATIICGLIMIALPVGIVANAFSEVIHRRDFIVNWSMVARVPLFSHLTAGDIAHIMQLLQARQIERGEVVFRRGEPATAMYFIAEGDVEIELGPEDKGRRIRLGTGHFFGEIAVLKRVERSATVKAVSRTRLLVLDGADLRALIAREPSIARKINQIVEGRTGRNLNLEIADLEGQADVSVEENA.

Transmembrane regions (helical) follow at residues 35–55 (FIVF…VPAM), 65–85 (ALEL…IWIA), 164–184 (LMAC…AMHI), 202–222 (WWAI…ATGI), and 225–245 (MVAS…VGIV). The Selectivity filter signature appears at 210-215 (TIGYGD). Position 270-388 (270-388 (LFSHLTAGDI…RKINQIVEGR (119 aa))) interacts with a nucleoside 3',5'-cyclic phosphate.

The protein belongs to the potassium channel family.

The protein resides in the cell membrane. The polypeptide is Putative potassium channel protein RPA4233 (Rhodopseudomonas palustris (strain ATCC BAA-98 / CGA009)).